We begin with the raw amino-acid sequence, 463 residues long: MKQQAKSRKPQQPEYIFQVETLSHEGRGIAHYGSHPDHPADKHGKKVFIRYALPGETVKAQITHEAKRLEEAEMVELLAEPSANRVEAVCPHYGICGGCSMQHIHPDEQIHLKQNVLQSHLQHFAGIQPEQWLEPIRSLQSDYRRRARIGVRYLPKQDRLILGFREHHSNRLTSIHTCSVLDKKLSDNLPELRNLLQSLKGKAHIGHVELAKGDHEISLLVRHIEKLNNADVNQLRQFALHKGWQLYLQPKGPESLRRIDEEQGAMRLHYALNAFDVNFAFSPLDFTQVNATVNEQMVQLACELLQLQQGERVLDLFCGLGNFSLPLARCVGAKGQVVGVEASEEMVQRATDNAKRNNLVQASFFSQDLTKDFSHHSWANQGFDALLIDPPRAGAYEIMQYVPNFGAKRIVYVSCNPATLARDAGVLVQHGYQLKKAAVMDMFTHTEHVESIALFEKIQEIND.

The region spanning 6–76 is the TRAM domain; the sequence is KSRKPQQPEY…KRLEEAEMVE (71 aa). Residues cysteine 90, cysteine 96, cysteine 99, and cysteine 178 each coordinate [4Fe-4S] cluster. Glutamine 288, phenylalanine 317, asparagine 322, glutamate 341, aspartate 368, and aspartate 389 together coordinate S-adenosyl-L-methionine. Cysteine 415 functions as the Nucleophile in the catalytic mechanism.

Belongs to the class I-like SAM-binding methyltransferase superfamily. RNA M5U methyltransferase family. RlmD subfamily.

It carries out the reaction uridine(1939) in 23S rRNA + S-adenosyl-L-methionine = 5-methyluridine(1939) in 23S rRNA + S-adenosyl-L-homocysteine + H(+). Catalyzes the formation of 5-methyl-uridine at position 1939 (m5U1939) in 23S rRNA. This Acinetobacter baumannii (strain AYE) protein is 23S rRNA (uracil(1939)-C(5))-methyltransferase RlmD.